A 180-amino-acid polypeptide reads, in one-letter code: Shikimate kinase (180 aa).

14 to 19 is an ATP binding site; that stretch reads GAGKST. Residue serine 18 participates in Mg(2+) binding. Residues aspartate 36, arginine 60, and glycine 82 each coordinate substrate. Arginine 120 provides a ligand contact to ATP. Arginine 140 serves as a coordination point for substrate. ATP is bound at residue glutamine 157.

The protein belongs to the shikimate kinase family. In terms of assembly, monomer. Requires Mg(2+) as cofactor.

It localises to the cytoplasm. The enzyme catalyses shikimate + ATP = 3-phosphoshikimate + ADP + H(+). Its pathway is metabolic intermediate biosynthesis; chorismate biosynthesis; chorismate from D-erythrose 4-phosphate and phosphoenolpyruvate: step 5/7. In terms of biological role, catalyzes the specific phosphorylation of the 3-hydroxyl group of shikimic acid using ATP as a cosubstrate. In Haemophilus influenzae (strain PittEE), this protein is Shikimate kinase.